Reading from the N-terminus, the 263-residue chain is UPF0246 protein Mmar10_0828 (263 aa).

It belongs to the UPF0246 family.

The chain is UPF0246 protein Mmar10_0828 from Maricaulis maris (strain MCS10) (Caulobacter maris).